Here is a 181-residue protein sequence, read N- to C-terminus: MTVRLKTLYLDTAVPKLQEQFKYKNAHEIPKVTKVSVNRGLGEASQNAKALERSLEELAVITGQRPVVTRAKKAIAGFKIRQGMPVGVMVTLRGERMYAFLDRLVNLALPRIRDFRGVSPKSFDGRGNYTLGLREQLIFPEVDYDSIDQIRGMDISIITTAKTDEEGRALLKVLGMPFREN.

It belongs to the universal ribosomal protein uL5 family. Part of the 50S ribosomal subunit; part of the 5S rRNA/L5/L18/L25 subcomplex. Contacts the 5S rRNA and the P site tRNA. Forms a bridge to the 30S subunit in the 70S ribosome.

This is one of the proteins that bind and probably mediate the attachment of the 5S RNA into the large ribosomal subunit, where it forms part of the central protuberance. In the 70S ribosome it contacts protein S13 of the 30S subunit (bridge B1b), connecting the 2 subunits; this bridge is implicated in subunit movement. Contacts the P site tRNA; the 5S rRNA and some of its associated proteins might help stabilize positioning of ribosome-bound tRNAs. The protein is Large ribosomal subunit protein uL5 of Acaryochloris marina (strain MBIC 11017).